The sequence spans 558 residues: Potassium-transporting ATPase potassium-binding subunit 1 (558 aa).

Transmembrane regions (helical) follow at residues 1 to 21, 66 to 86, 127 to 147, 166 to 186, 245 to 265, 281 to 301, 327 to 347, 354 to 374, 377 to 397, 416 to 436, 482 to 502, and 531 to 551; these read MEIILFLTMMVMIAYVFSGYL, FNGFMGVITFVLLIVQQWLFL, MIVMTYLMFTSSASGYAVCIA, IVRFIVRVLLPLSCLISILLM, IWSNFIEMGSMMLLPMSMLFL, ALILFVAMFFIFIAILTLTMW, FGAGLSALFTVITTAFTTGSV, LTPLGGLGPMVLMMLNVVFGG, VGLMNLLIYVLLTLFICSLMV, IVLVFLIHPILILVFSALAFM, ISTGIIMLLSRYIPIILQLMI, and IVFIVLLSGLTFIPVLLLGPI.

Belongs to the KdpA family. As to quaternary structure, the system is composed of three essential subunits: KdpA, KdpB and KdpC.

It is found in the cell membrane. Its function is as follows. Part of the high-affinity ATP-driven potassium transport (or Kdp) system, which catalyzes the hydrolysis of ATP coupled with the electrogenic transport of potassium into the cytoplasm. This subunit binds the extracellular potassium ions and delivers the ions to the membrane domain of KdpB through an intramembrane tunnel. The protein is Potassium-transporting ATPase potassium-binding subunit 1 of Staphylococcus aureus (strain MRSA252).